A 388-amino-acid polypeptide reads, in one-letter code: Tumor protein p53-inducible protein 13 (388 aa).

An N-terminal signal peptide occupies residues 1-27 (MVPPPPPPSRLLLVALVGLLSLHEVVA). Residues 28–304 (EPAEEAGTRC…ARGPTPRTEE (277 aa)) are Extracellular-facing. Residues 305–325 (AAWAAMALTFLLVLLTLATLC) traverse the membrane as a helical segment. Topologically, residues 326–388 (TRLHRNFRRS…DSGPDSESSD (63 aa)) are cytoplasmic. Over residues 361–372 (PSRRIKRSRRRP) the composition is skewed to basic residues. The segment at 361-388 (PSRRIKRSRRRPLLPPTPDSGPDSESSD) is disordered.

The protein localises to the cell membrane. The protein resides in the cytoplasm. Functionally, may act as a tumor suppressor. Inhibits tumor cell growth, when overexpressed. The protein is Tumor protein p53-inducible protein 13 (Tp53i13) of Rattus norvegicus (Rat).